A 385-amino-acid polypeptide reads, in one-letter code: Cytochrome b (385 aa).

Helical transmembrane passes span 32 to 52, 76 to 98, 113 to 133, and 179 to 199; these read FGSL…TLAM, WLVR…LHIG, TWAI…LGYV, and FFAL…MHLI. Residues histidine 82 and histidine 96 each contribute to the heme b site. Heme b is bound by residues histidine 183 and histidine 197. Histidine 202 is an a ubiquinone binding site. 4 helical membrane passes run 226-246, 290-310, 322-342, and 349-369; these read FIFK…IFVF, LLGV…PITD, LSKV…QIGA, and FIEL…VIVP.

The protein belongs to the cytochrome b family. In terms of assembly, fungal cytochrome b-c1 complex contains 10 subunits; 3 respiratory subunits, 2 core proteins and 5 low-molecular weight proteins. Cytochrome b-c1 complex is a homodimer. The cofactor is heme b.

It is found in the mitochondrion inner membrane. Component of the ubiquinol-cytochrome c reductase complex (complex III or cytochrome b-c1 complex) that is part of the mitochondrial respiratory chain. The b-c1 complex mediates electron transfer from ubiquinol to cytochrome c. Contributes to the generation of a proton gradient across the mitochondrial membrane that is then used for ATP synthesis. In Aspergillus tubingensis, this protein is Cytochrome b (cob).